The following is a 431-amino-acid chain: Tol-Pal system protein TolB (431 aa).

The first 26 residues, 1–26, serve as a signal peptide directing secretion; that stretch reads MRLMTKLGFRALVASCLIAAGGAANA. The interval 411–431 is disordered; that stretch reads PQILSVQGGSVREPSWGPFMQ.

The protein belongs to the TolB family. As to quaternary structure, the Tol-Pal system is composed of five core proteins: the inner membrane proteins TolA, TolQ and TolR, the periplasmic protein TolB and the outer membrane protein Pal. They form a network linking the inner and outer membranes and the peptidoglycan layer.

It localises to the periplasm. Functionally, part of the Tol-Pal system, which plays a role in outer membrane invagination during cell division and is important for maintaining outer membrane integrity. The sequence is that of Tol-Pal system protein TolB from Burkholderia ambifaria (strain MC40-6).